We begin with the raw amino-acid sequence, 61 residues long: Cecropin-D (61 aa).

An N-terminal signal peptide occupies residues 1–22 (MKFSKIFVFVFAIVFATASVSA). A propeptide spans 23 to 24 (AP) (removed by a dipeptidylpeptidase). Gln60 is modified (glutamine amide).

The protein belongs to the cecropin family. As to expression, mainly in fat body. Lower in hemocytes. Not expressed in midguts, malpighian tubules and silk glands.

Its subcellular location is the secreted. In terms of biological role, cecropins have lytic and antibacterial activity against several Gram-positive and Gram-negative bacteria. The chain is Cecropin-D (CECD) from Bombyx mori (Silk moth).